Here is a 160-residue protein sequence, read N- to C-terminus: Small ribosomal subunit protein bS6 (160 aa).

Belongs to the bacterial ribosomal protein bS6 family.

Binds together with bS18 to 16S ribosomal RNA. The sequence is that of Small ribosomal subunit protein bS6 from Ureaplasma urealyticum serovar 10 (strain ATCC 33699 / Western).